The chain runs to 500 residues: MATIWFLPLLFLSCLLLAALRLKKRRQHQRKPPSPPGFPIIGNLHQLGELPHQSLWSLSKKYGPVMLLKFGSIPTVVVSSSETAKQALKIHDLNCCSRPSLAGPRALSYNYLDIVFSPFNDYWKELRRMCVQELFSPKQVHLIQPIREEEVKKLMNSFSESAAQKTPVNLSEKLASLTVGVICKAAFGVSFQGTVLNSDNFDKLIHDAFLFLGSFSASDYFPNVGWIIDWLTGLQGQRERSVRGLDAFYEQMFDLHKQGNKEGVEDFVDLLLKLEKEETVLGYGKLTRNHIKAVLMNVLLGGIGTSAITMTWAMTELMRNPRVMKKVQSEIRNQIGGKSMICLDDIDQLHYLKMVINETWRLHPPAPLLVPREVMSEFEINGYTIPAKTRLYVNVWGIGRDPDTWKDPEEFLPERFVNSNIDAKGQNFELLPFGSGRRMCPAMYMGTTMVEFGLANLLYHFDWKLPEGMVVEDIDMEESPGLNASKKNELVLVPRKYLNL.

A helical membrane pass occupies residues 2–22 (ATIWFLPLLFLSCLLLAALRL). A heme-binding site is contributed by cysteine 440.

It belongs to the cytochrome P450 family. Heme is required as a cofactor.

Its subcellular location is the membrane. The polypeptide is Cytochrome P450 71B37 (CYP71B37) (Arabidopsis thaliana (Mouse-ear cress)).